The chain runs to 367 residues: Ribosomal lysine N-methyltransferase 5 (367 aa).

Residues 55-74 are disordered; that stretch reads EGGRKKKRVRRRNKASSVEE. Positions 58–68 are enriched in basic residues; sequence RKKKRVRRRNK. S-adenosyl-L-methionine-binding positions include Trp110, 170-172, Asp192, Trp256, and Met288; that span reads GAG.

This sequence belongs to the class I-like SAM-binding methyltransferase superfamily. RKM5 family.

S-adenosyl-L-methionine-dependent protein-lysine N-methyltransferase that monomethylates 60S ribosomal protein L1 (RPL1A and RPL1B) at 'Lys-46'. This chain is Ribosomal lysine N-methyltransferase 5 (RKM5), found in Saccharomyces cerevisiae (strain AWRI796) (Baker's yeast).